Reading from the N-terminus, the 270-residue chain is Putative pyruvate, phosphate dikinase regulatory protein (270 aa).

An ADP-binding site is contributed by G151–T158.

Belongs to the pyruvate, phosphate/water dikinase regulatory protein family. PDRP subfamily.

The catalysed reaction is N(tele)-phospho-L-histidyl/L-threonyl-[pyruvate, phosphate dikinase] + ADP = N(tele)-phospho-L-histidyl/O-phospho-L-threonyl-[pyruvate, phosphate dikinase] + AMP + H(+). It carries out the reaction N(tele)-phospho-L-histidyl/O-phospho-L-threonyl-[pyruvate, phosphate dikinase] + phosphate + H(+) = N(tele)-phospho-L-histidyl/L-threonyl-[pyruvate, phosphate dikinase] + diphosphate. Bifunctional serine/threonine kinase and phosphorylase involved in the regulation of the pyruvate, phosphate dikinase (PPDK) by catalyzing its phosphorylation/dephosphorylation. The sequence is that of Putative pyruvate, phosphate dikinase regulatory protein from Bacillus velezensis (strain DSM 23117 / BGSC 10A6 / LMG 26770 / FZB42) (Bacillus amyloliquefaciens subsp. plantarum).